The following is a 962-amino-acid chain: Exportin-T (962 aa).

N-acetylmethionine is present on methionine 1. An N6-acetyllysine modification is found at lysine 634.

In terms of assembly, found in a complex with XPOT, Ran and tRNA. Probably found in a complex with nucleoporins. Interacts with Ran and tRNA in a GTP-dependent manner.

It localises to the nucleus. The protein resides in the cytoplasm. In terms of biological role, mediates the nuclear export of aminoacylated tRNAs. In the nucleus binds to tRNA and to the GTPase Ran in its active GTP-bound form. Docking of this trimeric complex to the nuclear pore complex (NPC) is mediated through binding to nucleoporins. Upon transit of a nuclear export complex into the cytoplasm, disassembling of the complex and hydrolysis of Ran-GTP to Ran-GDP (induced by RANBP1 and RANGAP1, respectively) cause release of the tRNA from the export receptor. XPOT then return to the nuclear compartment and mediate another round of transport. The directionality of nuclear export is thought to be conferred by an asymmetric distribution of the GTP- and GDP-bound forms of Ran between the cytoplasm and nucleus. This is Exportin-T (XPOT) from Pongo abelii (Sumatran orangutan).